Here is a 417-residue protein sequence, read N- to C-terminus: Phosphoglycerate kinase 2 (417 aa).

14 residues coordinate (2R)-3-phosphoglycerate: Val-23, Asp-24, Phe-25, Asn-26, Asn-38, Arg-39, Ser-62, His-63, Gly-65, Arg-66, Leu-121, Arg-122, His-168, and Arg-169. Gly-212 lines the ADP pocket. Gly-212 is a binding site for CDP. The AMP site is built by Ala-213 and Lys-214. ATP is bound at residue Ala-213. Ala-213 contributes to the Mg(2+) binding site. Asp-217 contacts CDP. Asp-217 is a binding site for Mg(2+). Lys-218 lines the AMP pocket. Residue Lys-218 participates in ATP binding. Position 236 (Gly-236) interacts with ADP. A CDP-binding site is contributed by Gly-236. Residues Gly-237 and Gly-312 each contribute to the AMP site. Residues Gly-237 and Gly-312 each contribute to the ATP site. Positions 337 and 342 each coordinate CDP. Residue Phe-342 participates in ADP binding. Residue Glu-343 participates in AMP binding. Glu-343, Asp-374, and Thr-375 together coordinate ATP. Mg(2+) is bound at residue Asp-374.

The protein belongs to the phosphoglycerate kinase family. As to quaternary structure, monomer. Mg(2+) is required as a cofactor.

It is found in the cytoplasm. The protein localises to the mitochondrion. The catalysed reaction is (2R)-3-phosphoglycerate + ATP = (2R)-3-phospho-glyceroyl phosphate + ADP. It participates in carbohydrate degradation; glycolysis; pyruvate from D-glyceraldehyde 3-phosphate: step 2/5. In terms of biological role, catalyzes one of the two ATP producing reactions in the glycolytic pathway via the reversible conversion of 1,3-diphosphoglycerate to 3-phosphoglycerate. Both L- and D- forms of purine and pyrimidine nucleotides can be used as substrates, but the activity is much lower on pyrimidines. Negatively regulates the biosynthesis of acetyl-CoA from pyruvate in the mitochondrion. This is Phosphoglycerate kinase 2 (PGK2) from Rhizopus niveus.